A 377-amino-acid polypeptide reads, in one-letter code: Succinyl-diaminopimelate desuccinylase (377 aa).

His66 provides a ligand contact to Zn(2+). Asp68 is a catalytic residue. Residue Asp99 participates in Zn(2+) binding. The active-site Proton acceptor is Glu133. Residues Glu134, Glu162, and His348 each contribute to the Zn(2+) site.

It belongs to the peptidase M20A family. DapE subfamily. As to quaternary structure, homodimer. Zn(2+) is required as a cofactor. Requires Co(2+) as cofactor.

The enzyme catalyses N-succinyl-(2S,6S)-2,6-diaminopimelate + H2O = (2S,6S)-2,6-diaminopimelate + succinate. Its pathway is amino-acid biosynthesis; L-lysine biosynthesis via DAP pathway; LL-2,6-diaminopimelate from (S)-tetrahydrodipicolinate (succinylase route): step 3/3. In terms of biological role, catalyzes the hydrolysis of N-succinyl-L,L-diaminopimelic acid (SDAP), forming succinate and LL-2,6-diaminopimelate (DAP), an intermediate involved in the bacterial biosynthesis of lysine and meso-diaminopimelic acid, an essential component of bacterial cell walls. In Marinomonas sp. (strain MWYL1), this protein is Succinyl-diaminopimelate desuccinylase.